The sequence spans 336 residues: Potassium channel subfamily K member 1 (336 aa).

Residues 1-20 (MLQSLAGSSCVRLVERHRSA) lie on the Cytoplasmic side of the membrane. The helical transmembrane segment at 21-41 (WCFGFLVLGYLLYLVFGAVVF) threads the bilayer. The Extracellular segment spans residues 42–103 (SSVELPYEDL…SNASGNWNWD (62 aa)). N-linked (GlcNAc...) asparagine glycosylation is present at Asn95. The segment at residues 104–116 (FASALFFASTVLS) is an intramembrane region (helical). An intramembrane segment occupies 117–122 (TTGYGH). Residues 117 to 122 (TTGYGH) are selectivity filter 1. Over 123–132 (TVPLSDGGKA) the chain is Extracellular. The helical transmembrane segment at 133–156 (FCIIYSVIGIPFTLLFLTAVVQRV) threads the bilayer. The Cytoplasmic segment spans residues 157–181 (TVHVTRRPVLYFHVRWGFSKQVVAI). The helical transmembrane segment at 182-202 (VHAVLLGLITVSCFFFIPAAV) threads the bilayer. Over 203-211 (FSVLEDDWN) the chain is Extracellular. Positions 212 to 224 (FLESFYFCFISLS) form an intramembrane region, helical. The interval 225-230 (TIGLGD) is selectivity filter 2. Residues 225–231 (TIGLGDY) lie within the membrane without spanning it. Over 232–243 (VPGEGYNQKFRE) the chain is Extracellular. A helical membrane pass occupies residues 244 to 267 (LYKIGITCYLLLGLIAMLVVLETF). Over 268 to 336 (CELHELKKFR…SACADGPANH (69 aa)) the chain is Cytoplasmic. Residue Lys274 forms a Glycyl lysine isopeptide (Lys-Gly) (interchain with G-Cter in SUMO) linkage. Residues 293-299 (IIEHDQL) form an important for intracellular retention in recycling endosomes region. A disordered region spans residues 315–336 (QKQNEPFVATPSSACADGPANH). At Ser326 the chain carries Phosphoserine.

Belongs to the two pore domain potassium channel (TC 1.A.1.8) family. As to quaternary structure, homodimer; disulfide-linked. Heterodimer with KCNK2; disulfide-linked. In astrocytes, forms mostly heterodimeric potassium channels with KCNK2, with only a minor proportion of functional channels containing homodimeric KCNK1. Interacts with KCNK3 and KCNK9, forming functional heterodimeric channels. Interacts with GNG4. Identified in a complex with PSD and ARF6; interacts only with PSD that is bound to ARF6. Interacts with UBE2I. Post-translationally, sumoylation is controversial. Sumoylated by UBE2I. Not sumoylated when expressed in xenopus oocytes or mammalian cells. Sumoylation inactivates the channel, but does not interfere with expression at the cell membrane. Sumoylation of a single subunit is sufficient to silence the dimeric channel. Sumoylation of KCNK1 is sufficient to silence heterodimeric channels formed by KCNK1 and KCNK3 or KCNK9. Desumoylated by SENP1; this activates the channel. Desumoylated by SENP1; this strongly increases halothane-mediated activation of heterodimeric channels formed with KCNK9. SENP1 treatment has no effect. As to expression, expressed in renal distal tubules, especially in cortical collecting duct and cortical thick ascending limb, with lower levels in the connecting tubule.

It localises to the cell membrane. The protein resides in the recycling endosome. The protein localises to the synaptic cell membrane. It is found in the cytoplasmic vesicle. Its subcellular location is the perikaryon. It localises to the cell projection. The protein resides in the dendrite. The protein localises to the apical cell membrane. It carries out the reaction K(+)(in) = K(+)(out). The enzyme catalyses NH4(+)(in) = NH4(+)(out). The catalysed reaction is Na(+)(in) = Na(+)(out). It catalyses the reaction Rb(+)(in) = Rb(+)(out). It carries out the reaction Cs(+)(in) = Cs(+)(out). The enzyme catalyses Li(+)(in) = Li(+)(out). The catalysed reaction is L-glutamate(out) = L-glutamate(in). It catalyses the reaction chloride(in) = chloride(out). Its function is as follows. Ion channel that contributes to passive transmembrane potassium transport and to the regulation of the resting membrane potential in brain astrocytes, but also in kidney and in other tissues. Forms dimeric channels through which potassium ions pass in accordance with their electrochemical gradient. The channel is selective for K(+) ions at physiological potassium concentrations and at neutral pH, but becomes permeable to Na(+) at subphysiological K(+) levels and upon acidification of the extracellular medium. The homodimer has very low potassium channel activity, when expressed in heterologous systems, and can function as weakly inward rectifying potassium channel. Channel activity is modulated by activation of serotonin receptors. Heterodimeric channels containing KCNK1 and KCNK2 have much higher activity, and may represent the predominant form in astrocytes. Heterodimeric channels containing KCNK1 and KCNK3 or KCNK9 have much higher activity. Heterodimeric channels formed by KCNK1 and KCNK9 may contribute to halothane-sensitive currents. Mediates outward rectifying potassium currents in dentate gyrus granule cells and contributes to the regulation of their resting membrane potential. Contributes to the regulation of action potential firing in dentate gyrus granule cells and down-regulates their intrinsic excitability. In astrocytes, the heterodimer formed by KCNK1 and KCNK2 is required for rapid glutamate release in response to activation of G-protein coupled receptors, such as F2R and CNR1. Required for normal ion and water transport in the kidney. Contributes to the regulation of the resting membrane potential of pancreatic beta cells. The low channel activity of homodimeric KCNK1 may be due to sumoylation. The low channel activity may be due to rapid internalization from the cell membrane and retention in recycling endosomes. Permeable to monovalent cations with ion selectivity for K(+) &gt; Rb(+) &gt;&gt; NH4(+) &gt;&gt; Cs(+) = Na(+) = Li(+). The sequence is that of Potassium channel subfamily K member 1 from Oryctolagus cuniculus (Rabbit).